Consider the following 403-residue polypeptide: Putative queuine tRNA-ribosyltransferase (403 aa).

The active-site Proton acceptor is the aspartate 91. Residues 91-95 (DSGGF), aspartate 177, glutamine 218, and glycine 245 contribute to the substrate site. The segment at 275 to 281 (GIGAIED) is RNA binding. Aspartate 294 acts as the Nucleophile in catalysis. The segment at 299 to 303 (ARWAR) is RNA binding; important for wobble base 34 recognition. 4 residues coordinate Zn(2+): cysteine 341, cysteine 343, cysteine 346, and histidine 372.

Belongs to the queuine tRNA-ribosyltransferase family. As to quaternary structure, homodimer. Within each dimer, one monomer is responsible for RNA recognition and catalysis, while the other monomer binds to the replacement base PreQ1. Requires Zn(2+) as cofactor.

It carries out the reaction 7-aminomethyl-7-carbaguanine + guanosine(34) in tRNA = 7-aminomethyl-7-carbaguanosine(34) in tRNA + guanine. In terms of biological role, catalyzes the base-exchange of a guanine (G) residue with the queuine precursor 7-aminomethyl-7-deazaguanine (PreQ1) at position 34 (anticodon wobble position) in tRNAs with GU(N) anticodons (tRNA-Asp, -Asn, -His and -Tyr). Catalysis occurs through a double-displacement mechanism. The nucleophile active site attacks the C1' of nucleotide 34 to detach the guanine base from the RNA, forming a covalent enzyme-RNA intermediate. The proton acceptor active site deprotonates the incoming PreQ1, allowing a nucleophilic attack on the C1' of the ribose to form the product. After dissociation, two additional enzymatic reactions on the tRNA convert PreQ1 to queuine (Q), resulting in the hypermodified nucleoside queuosine (7-(((4,5-cis-dihydroxy-2-cyclopenten-1-yl)amino)methyl)-7-deazaguanosine). The chain is Putative queuine tRNA-ribosyltransferase from Archaeoglobus fulgidus (strain ATCC 49558 / DSM 4304 / JCM 9628 / NBRC 100126 / VC-16).